Consider the following 405-residue polypeptide: MTVRTPIYLDYSATTPIDPRVAEKMIPYLTEHFGNPASRSHAFGWTAEKAVENAREEVARLVNADPREIVWTSGATESNNLAIKGAANFYSPSKGKHIVTVQTEHKAVIDTVRELERLGYEATYLIPEPNGLIDLDKFKAALRPDTVLASVMLVNNEIGVIQDIEAIGNICREQGVIFHVDAAQATGKVHIDLQKLPVDLMSFSAHKTYGPKGIGALYVRRKPRVRIEAQMHGGGHERGMRSGTLATHQIVGMGEAFRIAREEMDSENVRIRQLRDRLLKGLQEIEEVYVNGDLEHRVAHNLNISFNFVEGESLIMAVKDIAVSSGSACTSASLEPSYVLRALGRSDELAHSSIRFSIGRFTTEEEIDYTIQLMKSKIGKLRELSPLWEMHLEGVDLNAVAWATH.

Pyridoxal 5'-phosphate-binding positions include 75–76, Asn-156, Gln-184, and 204–206; these read AT and SAH. Lys-207 is subject to N6-(pyridoxal phosphate)lysine. Thr-244 lines the pyridoxal 5'-phosphate pocket. The active-site Cysteine persulfide intermediate is the Cys-329. [2Fe-2S] cluster is bound at residue Cys-329.

It belongs to the class-V pyridoxal-phosphate-dependent aminotransferase family. NifS/IscS subfamily. As to quaternary structure, homodimer. Forms a heterotetramer with IscU, interacts with other sulfur acceptors. Pyridoxal 5'-phosphate is required as a cofactor.

Its subcellular location is the cytoplasm. The catalysed reaction is (sulfur carrier)-H + L-cysteine = (sulfur carrier)-SH + L-alanine. Its pathway is cofactor biosynthesis; iron-sulfur cluster biosynthesis. In terms of biological role, master enzyme that delivers sulfur to a number of partners involved in Fe-S cluster assembly, tRNA modification or cofactor biosynthesis. Catalyzes the removal of elemental sulfur atoms from cysteine to produce alanine. Functions as a sulfur delivery protein for Fe-S cluster synthesis onto IscU, an Fe-S scaffold assembly protein, as well as other S acceptor proteins. This Methylobacillus flagellatus (strain ATCC 51484 / DSM 6875 / VKM B-1610 / KT) protein is Cysteine desulfurase IscS.